A 316-amino-acid polypeptide reads, in one-letter code: MSDISKASLPKAIFLMGPTASGKTALAIELRKILPVELISVDSALIYKGMDIGTAKPNAEELLAAPHRLLDIRDPSQAYSAADFRRDALAEMADITAAGRIPLLVGGTMLYFKALLEGLSPLPSADPEVRARIEQQAAEQGWESLHRQLQEIDPVAAARIHPNDPQRLSRALEVFFISGKTLTELTQTSGDALPYQVHQFAIAPASRELLHQRIEQRFHQMLASGFEAEVRALFARGDLHTDLPSIRCVGYRQMWSYLEGEISYDEMVYRGVCATRQLAKRQITWLRGWEGVHWLDSEKPEQARDEVLQVVGAIAG.

17 to 24 (GPTASGKT) is a binding site for ATP. A substrate-binding site is contributed by 19 to 24 (TASGKT). Interaction with substrate tRNA stretches follow at residues 42 to 45 (DSAL), 166 to 170 (QRLSR), 247 to 252 (RCVGYR), and 280 to 287 (KRQITWLR).

This sequence belongs to the IPP transferase family. As to quaternary structure, monomer. Mg(2+) is required as a cofactor.

It carries out the reaction adenosine(37) in tRNA + dimethylallyl diphosphate = N(6)-dimethylallyladenosine(37) in tRNA + diphosphate. Functionally, catalyzes the transfer of a dimethylallyl group onto the adenine at position 37 in tRNAs that read codons beginning with uridine, leading to the formation of N6-(dimethylallyl)adenosine (i(6)A). In Escherichia fergusonii (strain ATCC 35469 / DSM 13698 / CCUG 18766 / IAM 14443 / JCM 21226 / LMG 7866 / NBRC 102419 / NCTC 12128 / CDC 0568-73), this protein is tRNA dimethylallyltransferase.